The chain runs to 74 residues: ATP synthase subunit 9, mitochondrial (74 aa).

2 helical membrane passes run 8 to 28 and 45 to 72; these read IGAG…GNVF and LFGY…LILF.

Belongs to the ATPase C chain family. In terms of assembly, F-type ATPases have 2 components, CF(1) - the catalytic core - and CF(0) - the membrane proton channel. CF(1) has five subunits: alpha(3), beta(3), gamma(1), delta(1), epsilon(1). CF(0) has three main subunits: a, b and c.

Its subcellular location is the mitochondrion membrane. Its function is as follows. This protein is one of the chains of the nonenzymatic membrane component (F0) of mitochondrial ATPase. This Pisum sativum (Garden pea) protein is ATP synthase subunit 9, mitochondrial (ATP9).